The sequence spans 41 residues: Competence-stimulating peptide type 2 (41 aa).

Positions M1–G24 are excised as a propeptide.

The protein belongs to the ComC family.

It is found in the secreted. In terms of biological role, acts as a pheromone, induces cells to develop competence for genetic transformation. This Streptococcus pneumoniae serotype 4 (strain ATCC BAA-334 / TIGR4) protein is Competence-stimulating peptide type 2 (comC2).